Here is a 451-residue protein sequence, read N- to C-terminus: Tubulin gamma-2 chain (451 aa).

S131 carries the phosphoserine; by BRSK1 modification. 142–148 (AGGTGSG) contributes to the GTP binding site.

The protein belongs to the tubulin family. In terms of assembly, component of the gamma-tubulin ring complex (gTuRC) consisting of TUBGCP2, TUBGCP3, TUBGCP4, TUBGCP5 and TUBGCP6 and gamma-tubulin TUBG1 or TUBG2. TUBGCP2, TUBGCP3, TUBGCP4, TUBGCP5 and TUBGCP6 assemble in a 5:5:2:1:1 stoichiometry; each is associated with a gamma-tubulin, thereby arranging 14 gamma-tubulins in a helical manner. Gamma-tubulin at the first position is blocked by TUBGCP3 at the last position, allowing 13 protafilaments to grow into a microtubule. Interacts with alpha-beta tubulin heterodimers; the interaction allows microtubules to nucleate from the gTuRC. Post-translationally, phosphorylation at Ser-131 by BRSK1 regulates centrosome duplication, possibly by mediating relocation of gamma-tubulin and its associated proteins from the cytoplasm to the centrosome.

It is found in the cytoplasm. It localises to the cytoskeleton. The protein localises to the microtubule organizing center. The protein resides in the centrosome. Tubulin is the major constituent of microtubules, protein filaments consisting of alpha- and beta-tubulin heterodimers. Gamma-tubulin is a key component of the gamma-tubulin ring complex (gTuRC) which mediates microtubule nucleation. The gTuRC regulates the minus-end nucleation of alpha-beta tubulin heterodimers that grow into microtubule protafilaments, a critical step in centrosome duplication and spindle formation. This Mus musculus (Mouse) protein is Tubulin gamma-2 chain (Tubg2).